A 319-amino-acid chain; its full sequence is Ribonuclease Z (319 aa).

His-62, His-64, Asp-66, His-67, His-145, Asp-215, and His-273 together coordinate Zn(2+). Catalysis depends on Asp-66, which acts as the Proton acceptor.

The protein belongs to the RNase Z family. In terms of assembly, homodimer. The cofactor is Zn(2+).

The enzyme catalyses Endonucleolytic cleavage of RNA, removing extra 3' nucleotides from tRNA precursor, generating 3' termini of tRNAs. A 3'-hydroxy group is left at the tRNA terminus and a 5'-phosphoryl group is left at the trailer molecule.. Functionally, zinc phosphodiesterase, which displays some tRNA 3'-processing endonuclease activity. Probably involved in tRNA maturation, by removing a 3'-trailer from precursor tRNA. The chain is Ribonuclease Z from Borrelia recurrentis (strain A1).